Consider the following 142-residue polypeptide: Large ribosomal subunit protein bL17 (142 aa).

Belongs to the bacterial ribosomal protein bL17 family. Part of the 50S ribosomal subunit. Contacts protein L32.

The chain is Large ribosomal subunit protein bL17 from Methylocella silvestris (strain DSM 15510 / CIP 108128 / LMG 27833 / NCIMB 13906 / BL2).